A 188-amino-acid chain; its full sequence is Peroxynitrite isomerase (188 aa).

The short motif at 35–41 is the GXWXGXG element; sequence GTWRGEG. Heme b is bound at residue His178.

Belongs to the nitrobindin family. In terms of assembly, homodimer. It depends on heme b as a cofactor.

It catalyses the reaction peroxynitrite = nitrate. Its pathway is nitrogen metabolism. Its function is as follows. Heme-binding protein able to scavenge peroxynitrite and to protect free L-tyrosine against peroxynitrite-mediated nitration, by acting as a peroxynitrite isomerase that converts peroxynitrite to nitrate. Therefore, this protein likely plays a role in peroxynitrite sensing and in the detoxification of reactive nitrogen and oxygen species (RNS and ROS, respectively). Is able to bind nitric oxide (NO) in vitro, but may act as a sensor of peroxynitrite levels in vivo. This is Peroxynitrite isomerase from Frankia casuarinae (strain DSM 45818 / CECT 9043 / HFP020203 / CcI3).